A 403-amino-acid chain; its full sequence is Serine/threonine transporter SstT (403 aa).

The next 9 membrane-spanning stretches (helical) occupy residues V14–I34, V44–S64, I79–M99, A138–L158, G175–V195, L214–F234, M295–I315, V327–I347, and L353–V373.

This sequence belongs to the dicarboxylate/amino acid:cation symporter (DAACS) (TC 2.A.23) family.

It is found in the cell inner membrane. It carries out the reaction L-serine(in) + Na(+)(in) = L-serine(out) + Na(+)(out). It catalyses the reaction L-threonine(in) + Na(+)(in) = L-threonine(out) + Na(+)(out). Its function is as follows. Involved in the import of serine and threonine into the cell, with the concomitant import of sodium (symport system). This Pseudomonas putida (strain ATCC 47054 / DSM 6125 / CFBP 8728 / NCIMB 11950 / KT2440) protein is Serine/threonine transporter SstT.